The following is a 354-amino-acid chain: Stearoyl-CoA desaturase (354 aa).

The tract at residues 1–28 (MPGHLLQEEMTSSYTTTTTTITEPPSES) is disordered. Over 1–67 (MPGHLLQEEM…EGPPPKLEYV (67 aa)) the chain is Cytoplasmic. The segment covering 8-28 (EEMTSSYTTTTTTITEPPSES) has biased composition (low complexity). Residues 68–88 (WRNIILMALLHLGALYGLVLV) traverse the membrane as a helical segment. N70 serves as a coordination point for substrate. The Lumenal portion of the chain corresponds to 89–92 (PSSK). The chain crosses the membrane as a helical span at residues 93–113 (VYTLLWAFVYYVISIEGIGAG). Residues 114-212 (VHRLWSHRTY…EKLVMFQRRY (99 aa)) lie on the Cytoplasmic side of the membrane. H115 and H120 together coordinate Fe cation. The Histidine box-1 motif lies at 115-120 (HRLWSH). 3 residues coordinate substrate: N143, R150, and D151. Positions 152, 155, and 156 each coordinate Fe cation. The short motif at 152–156 (HRAHH) is the Histidine box-2 element. Substrate contacts are provided by R183 and K184. The residue at position 198 (S198) is a Phosphoserine. Residues 213–232 (YKPAILLMCFILPTFVPWYF) form a helical membrane-spanning segment. Residues 233-236 (WGEA) lie on the Lumenal side of the membrane. A helical transmembrane segment spans residues 237–258 (FVNSLCVSTFLRYTLVLNATWL). W257 lines the substrate pocket. The Cytoplasmic segment spans residues 259–354 (VNSAAHLYGY…RTGDGSCKSG (96 aa)). Fe cation contacts are provided by H264, H293, H296, and H297. A Histidine box-3 motif is present at residues 293-297 (HNYHH).

This sequence belongs to the fatty acid desaturase type 1 family. It depends on Fe(2+) as a cofactor.

It localises to the endoplasmic reticulum membrane. The enzyme catalyses octadecanoyl-CoA + 2 Fe(II)-[cytochrome b5] + O2 + 2 H(+) = (9Z)-octadecenoyl-CoA + 2 Fe(III)-[cytochrome b5] + 2 H2O. It carries out the reaction hexadecanoyl-CoA + 2 Fe(II)-[cytochrome b5] + O2 + 2 H(+) = (9Z)-hexadecenoyl-CoA + 2 Fe(III)-[cytochrome b5] + 2 H2O. Stearoyl-CoA desaturase that utilizes O(2) and electrons from reduced cytochrome b5 to introduce the first double bond into saturated fatty acyl-CoA substrates. Catalyzes the insertion of a cis double bond at the delta-9 position into fatty acyl-CoA substrates including palmitoyl-CoA and stearoyl-CoA. Gives rise to a mixture of 16:1 and 18:1 unsaturated fatty acids. Plays an important role in lipid biosynthesis. Plays an important role in regulating the expression of genes that are involved in lipogenesis and in regulating mitochondrial fatty acid oxidation. Plays an important role in body energy homeostasis. Contributes to the biosynthesis of membrane phospholipids, cholesterol esters and triglycerides. The chain is Stearoyl-CoA desaturase (SCD) from Mesocricetus auratus (Golden hamster).